The following is a 479-amino-acid chain: Aspartyl/glutamyl-tRNA(Asn/Gln) amidotransferase subunit B (479 aa).

Belongs to the GatB/GatE family. GatB subfamily. In terms of assembly, heterotrimer of A, B and C subunits.

The catalysed reaction is L-glutamyl-tRNA(Gln) + L-glutamine + ATP + H2O = L-glutaminyl-tRNA(Gln) + L-glutamate + ADP + phosphate + H(+). It carries out the reaction L-aspartyl-tRNA(Asn) + L-glutamine + ATP + H2O = L-asparaginyl-tRNA(Asn) + L-glutamate + ADP + phosphate + 2 H(+). Functionally, allows the formation of correctly charged Asn-tRNA(Asn) or Gln-tRNA(Gln) through the transamidation of misacylated Asp-tRNA(Asn) or Glu-tRNA(Gln) in organisms which lack either or both of asparaginyl-tRNA or glutaminyl-tRNA synthetases. The reaction takes place in the presence of glutamine and ATP through an activated phospho-Asp-tRNA(Asn) or phospho-Glu-tRNA(Gln). This is Aspartyl/glutamyl-tRNA(Asn/Gln) amidotransferase subunit B from Mycoplasma mycoides subsp. mycoides SC (strain CCUG 32753 / NCTC 10114 / PG1).